The sequence spans 479 residues: Glycerol-3-phosphate acyltransferase RAM2 (479 aa).

Helical transmembrane passes span 14 to 34 (YFAL…LVLA), 37 to 57 (LAGL…LIFA), 215 to 235 (SPLM…LACL), and 237 to 257 (IAAG…ALGV). Residues 284–289 (HRTLLD) carry the HXXXXD motif motif. Residue N448 is glycosylated (N-linked (GlcNAc...) asparagine).

This sequence belongs to the GPAT/DAPAT family.

The protein localises to the membrane. The catalysed reaction is sn-glycerol 3-phosphate + an acyl-CoA = a 1-acyl-sn-glycero-3-phosphate + CoA. It participates in lipid metabolism; glycerolipid metabolism. Involved in the production of cutin monomers. Esterifies acyl-group from acyl-ACP to the sn-2 position of glycerol-3-phosphate, a step in cutin biosynthesis. Required for colonization of the root by mycorrhizal fungi, and appropriate hyphopodia and arbuscule formation. Cutin monomers act as plant signals that promote colonization by arbuscular mycorrhizal fungi. This signaling function has been recruited by pathogenic oomycetes to facilitate appressoria formation and their own invasion. The protein is Glycerol-3-phosphate acyltransferase RAM2 of Petunia hybrida (Petunia).